Consider the following 429-residue polypeptide: Probable M18 family aminopeptidase 2 (429 aa).

Zn(2+)-binding residues include His-82, His-156, and His-401.

This sequence belongs to the peptidase M18 family. Requires Zn(2+) as cofactor.

The chain is Probable M18 family aminopeptidase 2 from Pseudomonas putida (strain GB-1).